Consider the following 290-residue polypeptide: Nucleotide-binding protein Bpet0443 (290 aa).

An ATP-binding site is contributed by 9-16; the sequence is GISGSGKS. Residue 58–61 coordinates GTP; that stretch reads DVRS.

Belongs to the RapZ-like family.

Its function is as follows. Displays ATPase and GTPase activities. The protein is Nucleotide-binding protein Bpet0443 of Bordetella petrii (strain ATCC BAA-461 / DSM 12804 / CCUG 43448).